A 479-amino-acid polypeptide reads, in one-letter code: MSNSALQVYGGDEITAVVIDPGSFTTNIGYSGTDCPQAILPSCYGKYTEGEKDELFSEQSIGLPRKDYEIHNIVQNGEVVDWEKAEKQWDWAIRSELRFETNSGMPALLTEPIWNSEENRKKSLEVLLESMDFSACYLVPTATAVSFAMGRPTCLVVDIGHDVTSVCPVVDGMTLSKSSMRSYIAGSLLNELIRSQLAPRKVIPLFQVAQRRPVFMERKFDYEIHPSLQKFVNERQFFQEFKETMLQVAPTSISKFKSEIETTSKRSIEAPWGEELVYDSLQRLEFAEQLFTPDLSQFPEDWPISKDGVVETWHNDYVPLKRNKPGTNVKDKEGTLDATPVPDENSVTSADQPNDNGKRNLEETTPDQKNEVSGLADLIYSSIMSTDVDLRTTLSHNVVITGGTSSLPGLMDRISAELNRSLPALKFRMLTSGQLRERQYQGWLGGSILASLGTFHQLWVGKQEYAEVGADRLLKDRFR.

Positions 320 to 370 (LKRNKPGTNVKDKEGTLDATPVPDENSVTSADQPNDNGKRNLEETTPDQKN) are disordered. Over residues 345 to 355 (NSVTSADQPND) the composition is skewed to polar residues. The span at 356 to 370 (NGKRNLEETTPDQKN) shows a compositional bias: basic and acidic residues.

This sequence belongs to the actin family. ARP4 subfamily. As to quaternary structure, component of the NuA4 histone acetyltransferase complex, of the INO80 chromatin remodeling complex, and of the SWR1 chromatin remodeling complex.

It is found in the nucleus. In terms of biological role, chromatin interaction component of the NuA4 histone acetyltransferase complex which is involved in transcriptional activation of selected genes principally by acetylation of nucleosomal histone H4 and H2A. The NuA4 complex is also involved in DNA repair. Is required for NuA4 complex integrity. Component of the SWR1 complex which mediates the ATP-dependent exchange of histone H2A for the H2A variant HZT1 leading to transcriptional regulation of selected genes by chromatin remodeling. Component of the INO80 complex which remodels chromatin by shifting nucleosomes and is involved in DNA repair. The polypeptide is Actin-related protein 4 (ARP4) (Eremothecium gossypii (strain ATCC 10895 / CBS 109.51 / FGSC 9923 / NRRL Y-1056) (Yeast)).